A 136-amino-acid chain; its full sequence is Transport protein particle 20 kDa subunit (136 aa).

The protein belongs to the TRAPP small subunits family. Sedlin subfamily.

It localises to the cytoplasm. It is found in the golgi apparatus. The protein localises to the cis-Golgi network. Its subcellular location is the endoplasmic reticulum. Its function is as follows. Component of the TRAPP I and TRAPP II complexes. TRAPP I plays a key role in the late stages of endoplasmic reticulum to Golgi traffic. TRAPP II seems to play a role in intra-Golgi transport. This chain is Transport protein particle 20 kDa subunit (trs20), found in Schizosaccharomyces pombe (strain 972 / ATCC 24843) (Fission yeast).